The sequence spans 201 residues: uncharacterized protein (201 aa).

The N-terminal stretch at 1–23 is a signal peptide; it reads MKILYFIFVIIINILLILNHVKS. At 24-178 the chain is on the extracellular side; the sequence is KYNTFIFENT…GNYGEDPQRN (155 aa). 2 N-linked (GlcNAc...) asparagine glycosylation sites follow: asparagine 114 and asparagine 134. Residues 122-157 form a disordered region; it reads TPETPSPTENAPNTSGGSSEGNHYTYKSSSSSSEHI. The span at 123–148 shows a compositional bias: polar residues; that stretch reads PETPSPTENAPNTSGGSSEGNHYTYK. A helical transmembrane segment spans residues 179-199; sequence IGISLSSSLIFISILFLIIFI. Residues 200–201 are Cytoplasmic-facing; sequence NN.

It is found in the membrane. This is an uncharacterized protein from Dictyostelium discoideum (Social amoeba).